Here is a 1196-residue protein sequence, read N- to C-terminus: ATP-dependent helicase/deoxyribonuclease subunit B (1196 aa).

Cys-823, Cys-1149, Cys-1152, and Cys-1158 together coordinate [4Fe-4S] cluster.

This sequence belongs to the helicase family. AddB/RexB type 2 subfamily. Heterodimer of AddA and RexB. It depends on Mg(2+) as a cofactor. Requires [4Fe-4S] cluster as cofactor.

In terms of biological role, the heterodimer acts as both an ATP-dependent DNA helicase and an ATP-dependent, dual-direction single-stranded exonuclease. Recognizes the chi site generating a DNA molecule suitable for the initiation of homologous recombination. This subunit has 5' -&gt; 3' nuclease activity but not helicase activity. The sequence is that of ATP-dependent helicase/deoxyribonuclease subunit B from Enterococcus faecalis (strain ATCC 700802 / V583).